Reading from the N-terminus, the 170-residue chain is Flavodoxin (170 aa).

Positions 4 to 165 constitute a Flavodoxin-like domain; that stretch reads IGLFFGTQTG…RIQAWVAQLK (162 aa).

This sequence belongs to the flavodoxin family. FMN is required as a cofactor.

Low-potential electron donor to a number of redox enzymes. The sequence is that of Flavodoxin (isiB) from Picosynechococcus sp. (strain ATCC 27264 / PCC 7002 / PR-6) (Agmenellum quadruplicatum).